We begin with the raw amino-acid sequence, 31 residues long: U14-ctenitoxin-Co1a (31 aa).

Post-translationally, disulfide bonds are present. In terms of tissue distribution, expressed by the venom gland.

The protein localises to the secreted. Omega-agatoxins are antagonists of voltage-gated calcium channels (Cav). The sequence is that of U14-ctenitoxin-Co1a from Ctenus ornatus (Brazilian spider).